Here is a 331-residue protein sequence, read N- to C-terminus: Phosphatidylinositol transfer protein 4 (331 aa).

It belongs to the PtdIns transfer protein family. PI transfer class IIA subfamily.

Functionally, catalyzes the transfer of PtdIns and phosphatidylcholine between membranes. This is Phosphatidylinositol transfer protein 4 (pitD) from Dictyostelium discoideum (Social amoeba).